The chain runs to 394 residues: Elongation factor Tu (394 aa).

The 195-residue stretch at K10–E204 folds into the tr-type G domain. The tract at residues G19–T26 is G1. G19 to T26 contributes to the GTP binding site. Residue T26 participates in Mg(2+) binding. The G2 stretch occupies residues G60–N64. Residues D81 to G84 are G3. Residues D81–H85 and N136–D139 each bind GTP. The G4 stretch occupies residues N136–D139. The tract at residues S174–L176 is G5.

The protein belongs to the TRAFAC class translation factor GTPase superfamily. Classic translation factor GTPase family. EF-Tu/EF-1A subfamily. As to quaternary structure, monomer.

It is found in the cytoplasm. It carries out the reaction GTP + H2O = GDP + phosphate + H(+). Functionally, GTP hydrolase that promotes the GTP-dependent binding of aminoacyl-tRNA to the A-site of ribosomes during protein biosynthesis. The protein is Elongation factor Tu of Francisella tularensis subsp. tularensis (strain FSC 198).